Consider the following 185-residue polypeptide: Elongation factor P (185 aa).

It belongs to the elongation factor P family.

The protein resides in the cytoplasm. Its pathway is protein biosynthesis; polypeptide chain elongation. Involved in peptide bond synthesis. Stimulates efficient translation and peptide-bond synthesis on native or reconstituted 70S ribosomes in vitro. Probably functions indirectly by altering the affinity of the ribosome for aminoacyl-tRNA, thus increasing their reactivity as acceptors for peptidyl transferase. This chain is Elongation factor P, found in Finegoldia magna (strain ATCC 29328 / DSM 20472 / WAL 2508) (Peptostreptococcus magnus).